We begin with the raw amino-acid sequence, 317 residues long: Putative 2-hydroxyacid dehydrogenase SAB2178 (317 aa).

NAD(+)-binding positions include 155–156, 234–236, and Asp260; these read EI and ASR. The active site involves Arg236. The active site involves Glu265. The Proton donor role is filled by His283. 283–286 lines the NAD(+) pocket; it reads HIGN.

It belongs to the D-isomer specific 2-hydroxyacid dehydrogenase family.

The polypeptide is Putative 2-hydroxyacid dehydrogenase SAB2178 (Staphylococcus aureus (strain bovine RF122 / ET3-1)).